We begin with the raw amino-acid sequence, 159 residues long: Aspartate carbamoyltransferase regulatory chain (159 aa).

Zn(2+) contacts are provided by C113, C118, C142, and C145.

It belongs to the PyrI family. Contains catalytic and regulatory chains. Zn(2+) is required as a cofactor.

Involved in allosteric regulation of aspartate carbamoyltransferase. The sequence is that of Aspartate carbamoyltransferase regulatory chain from Saccharolobus islandicus (strain Y.N.15.51 / Yellowstone #2) (Sulfolobus islandicus).